Reading from the N-terminus, the 245-residue chain is tRNA pseudouridine synthase A (245 aa).

Asp-52 functions as the Nucleophile in the catalytic mechanism. Tyr-111 contributes to the substrate binding site.

Belongs to the tRNA pseudouridine synthase TruA family. As to quaternary structure, homodimer.

The enzyme catalyses uridine(38/39/40) in tRNA = pseudouridine(38/39/40) in tRNA. Its function is as follows. Formation of pseudouridine at positions 38, 39 and 40 in the anticodon stem and loop of transfer RNAs. The protein is tRNA pseudouridine synthase A of Rhodopseudomonas palustris (strain BisB5).